Reading from the N-terminus, the 209-residue chain is Proteasome subunit beta (209 aa).

A propeptide spans 1–10 (MVEQSDTMKG) (removed in mature form; by autocatalysis). The Nucleophile role is filled by threonine 11.

This sequence belongs to the peptidase T1B family. The 20S proteasome core is composed of 14 alpha and 14 beta subunits that assemble into four stacked heptameric rings, resulting in a barrel-shaped structure. The two inner rings, each composed of seven catalytic beta subunits, are sandwiched by two outer rings, each composed of seven alpha subunits. The catalytic chamber with the active sites is on the inside of the barrel. Has a gated structure, the ends of the cylinder being occluded by the N-termini of the alpha-subunits. Is capped at one or both ends by the proteasome regulatory ATPase, PAN.

The protein localises to the cytoplasm. The catalysed reaction is Cleavage of peptide bonds with very broad specificity.. With respect to regulation, the formation of the proteasomal ATPase PAN-20S proteasome complex, via the docking of the C-termini of PAN into the intersubunit pockets in the alpha-rings, triggers opening of the gate for substrate entry. Interconversion between the open-gate and close-gate conformations leads to a dynamic regulation of the 20S proteasome proteolysis activity. Functionally, component of the proteasome core, a large protease complex with broad specificity involved in protein degradation. This is Proteasome subunit beta from Methanospirillum hungatei JF-1 (strain ATCC 27890 / DSM 864 / NBRC 100397 / JF-1).